Reading from the N-terminus, the 239-residue chain is Tetraspanin-9 (239 aa).

Topologically, residues 1–12 (MARGCLCCVKYM) are cytoplasmic. A helical membrane pass occupies residues 13-33 (LFLFNLLFWLGGCGLLGVGVW). Residues 34–55 (LSVSQGSFATLSPSFPSISAAN) are Extracellular-facing. A helical transmembrane segment spans residues 56-76 (LIITLGAVIMVTGFLGCLGAI). Residues 77–85 (KENKCLLLS) lie on the Cytoplasmic side of the membrane. The chain crosses the membrane as a helical span at residues 86 to 106 (FFITLLVILLAELILLILFFV). At 107 to 203 (YTDNVSENAR…VEEWLDDNKH (97 aa)) the chain is on the extracellular side. N-linked (GlcNAc...) asparagine glycans are attached at residues Asn-110 and Asn-180. The chain crosses the membrane as a helical span at residues 204 to 224 (LLGTIAMCVLVIQLLGMAFSM). Residues 225-239 (TLYQQIHRSGKKYEA) lie on the Cytoplasmic side of the membrane.

The protein belongs to the tetraspanin (TM4SF) family.

The protein resides in the membrane. This Salmo salar (Atlantic salmon) protein is Tetraspanin-9 (tspan9).